Consider the following 112-residue polypeptide: uncharacterized protein (112 aa).

The helical transmembrane segment at 62–82 (THSFIFFILFLFIFIFLTFSH) threads the bilayer.

It localises to the membrane. This is an uncharacterized protein from Saccharomyces cerevisiae (strain ATCC 204508 / S288c) (Baker's yeast).